The sequence spans 364 residues: 3-isopropylmalate dehydrogenase (364 aa).

79–92 contributes to the NAD(+) binding site; that stretch reads GPKWNNINETSRPE. Arg100, Arg110, Arg139, and Asp228 together coordinate substrate. Mg(2+) is bound by residues Asp228, Asp252, and Asp256. NAD(+) is bound at residue 286 to 298; it reads GSAPDIAGKNIAN.

Belongs to the isocitrate and isopropylmalate dehydrogenases family. LeuB type 1 subfamily. Homodimer. It depends on Mg(2+) as a cofactor. Mn(2+) is required as a cofactor.

The protein resides in the cytoplasm. The enzyme catalyses (2R,3S)-3-isopropylmalate + NAD(+) = 4-methyl-2-oxopentanoate + CO2 + NADH. It functions in the pathway amino-acid biosynthesis; L-leucine biosynthesis; L-leucine from 3-methyl-2-oxobutanoate: step 3/4. Catalyzes the oxidation of 3-carboxy-2-hydroxy-4-methylpentanoate (3-isopropylmalate) to 3-carboxy-4-methyl-2-oxopentanoate. The product decarboxylates to 4-methyl-2 oxopentanoate. The sequence is that of 3-isopropylmalate dehydrogenase from Blochmanniella floridana.